The following is a 330-amino-acid chain: Endo-1,4-beta-xylanase (330 aa).

Residues 2-330 (CSSIPSLREV…KPAFWRVVNI (329 aa)) form the GH10 domain. Glutamate 133 (proton donor) is an active-site residue. The active-site Nucleophile is glutamate 240.

It belongs to the glycosyl hydrolase 10 (cellulase F) family. Cytoplasmic xylanase subfamily.

It localises to the cytoplasm. The catalysed reaction is Endohydrolysis of (1-&gt;4)-beta-D-xylosidic linkages in xylans.. Its pathway is glycan degradation; xylan degradation. This chain is Endo-1,4-beta-xylanase (xynA), found in Geobacillus stearothermophilus (Bacillus stearothermophilus).